A 1464-amino-acid polypeptide reads, in one-letter code: Sister chromatid cohesion protein PDS5 homolog B-B (1464 aa).

One copy of the HEAT repeat lies at 383-419 (LLVNDQLLNFVRERTLDKRWRVRKEAMMGLAQIYKKY). A disordered region spans residues 1126-1464 (KSTNVLGAVN…MKSELEGPLL (339 aa)). Over residues 1137-1155 (PLSSAGKQMQSKSSRMETV) the composition is skewed to polar residues. Low complexity predominate over residues 1156 to 1168 (SNASSGSNPSSPG). Acidic residues predominate over residues 1177 to 1186 (TELDQIEYED). Composition is skewed to basic and acidic residues over residues 1197 to 1215 (KKSD…VEKP), 1234 to 1244 (ELSKPAQEPKS), and 1265 to 1274 (WQEKRLKEDL). Residues 1286-1295 (KKGRRGRPPK) are compositionally biased toward basic residues. Positions 1287–1299 (KGRRGRPPKSAKM) form a DNA-binding region, a.T hook 1. Over residues 1325–1342 (PTDEEDHLEISEEQDSEN) the composition is skewed to acidic residues. Residues 1347 to 1357 (RKGRGSSKKTP) show a composition bias toward basic residues. The segment covering 1359–1373 (KSDSTDSALDTSRPT) has biased composition (polar residues). DNA-binding regions (a.T hook) lie at residues 1375–1387 (QKRR…TPTV) and 1391–1403 (KSHV…VVSK). A compositionally biased stretch (basic residues) spans 1390 to 1400 (KKSHVGRPRKV). A compositionally biased stretch (acidic residues) spans 1425–1435 (SNEEETADEEV). The span at 1441–1453 (GRRRTAKKRRWIQ) shows a compositional bias: basic residues. The segment covering 1455–1464 (MKSELEGPLL) has biased composition (basic and acidic residues).

It belongs to the PDS5 family. Interacts with the cohesin complex. Post-translationally, phosphorylated in mitotic cells.

The protein resides in the nucleus. Its function is as follows. Plays a role in androgen-induced proliferative arrest. Required for maintenance of sister chromatid cohesion during mitosis. The polypeptide is Sister chromatid cohesion protein PDS5 homolog B-B (pds5b-b) (Xenopus laevis (African clawed frog)).